The following is an 81-amino-acid chain: Putative snRNP Sm-like protein (81 aa).

Positions 13 to 81 (RPLDALGNSL…RGDNIVYISP (69 aa)) constitute a Sm domain.

The protein belongs to the snRNP Sm proteins family.

In Methanothermobacter thermautotrophicus (strain ATCC 29096 / DSM 1053 / JCM 10044 / NBRC 100330 / Delta H) (Methanobacterium thermoautotrophicum), this protein is Putative snRNP Sm-like protein.